The following is a 202-amino-acid chain: Thymidylate kinase (202 aa).

7–14 (GIDGSGKT) serves as a coordination point for ATP.

It belongs to the thymidylate kinase family.

The enzyme catalyses dTMP + ATP = dTDP + ADP. In terms of biological role, phosphorylation of dTMP to form dTDP in both de novo and salvage pathways of dTTP synthesis. The chain is Thymidylate kinase from Ehrlichia canis (strain Jake).